A 138-amino-acid polypeptide reads, in one-letter code: Basic phospholipase A2 Drk-b1 (138 aa).

A signal peptide spans 1 to 16 (MRTLWIVAMCLIGVEG). Intrachain disulfides connect Cys-42–Cys-131, Cys-44–Cys-60, Cys-59–Cys-111, Cys-65–Cys-138, Cys-66–Cys-104, Cys-73–Cys-97, and Cys-91–Cys-102. Residues Tyr-43, Gly-45, and Gly-47 each coordinate Ca(2+). His-63 is an active-site residue. Asp-64 is a Ca(2+) binding site. Asp-105 is an active-site residue.

The cofactor is Ca(2+). In terms of tissue distribution, expressed by the venom gland.

Its subcellular location is the secreted. It catalyses the reaction a 1,2-diacyl-sn-glycero-3-phosphocholine + H2O = a 1-acyl-sn-glycero-3-phosphocholine + a fatty acid + H(+). Exhibits high hydrolytic activities and shows strong preference for the anionic micelles (dPPC with deoxycholate) to the zwitterionic micelles (dPPC with Triton X-100). PLA2 catalyzes the calcium-dependent hydrolysis of the 2-acyl groups in 3-sn-phosphoglycerides. The chain is Basic phospholipase A2 Drk-b1 from Daboia russelii (Russel's viper).